The chain runs to 284 residues: Pantothenate synthetase (284 aa).

An ATP-binding site is contributed by 30–37 (MGNLHNAH). The active-site Proton donor is H37. Position 61 (Q61) interacts with (R)-pantoate. Beta-alanine is bound at residue Q61. 149–152 (GIKD) contributes to the ATP binding site. Residue Q155 participates in (R)-pantoate binding. ATP-binding positions include V178 and 186–189 (MSSR).

It belongs to the pantothenate synthetase family. In terms of assembly, homodimer.

The protein resides in the cytoplasm. The enzyme catalyses (R)-pantoate + beta-alanine + ATP = (R)-pantothenate + AMP + diphosphate + H(+). It participates in cofactor biosynthesis; (R)-pantothenate biosynthesis; (R)-pantothenate from (R)-pantoate and beta-alanine: step 1/1. In terms of biological role, catalyzes the condensation of pantoate with beta-alanine in an ATP-dependent reaction via a pantoyl-adenylate intermediate. In Saccharophagus degradans (strain 2-40 / ATCC 43961 / DSM 17024), this protein is Pantothenate synthetase.